Here is a 186-residue protein sequence, read N- to C-terminus: UPF0301 protein APL_0232 (186 aa).

It belongs to the UPF0301 (AlgH) family.

This chain is UPF0301 protein APL_0232, found in Actinobacillus pleuropneumoniae serotype 5b (strain L20).